Reading from the N-terminus, the 652-residue chain is MKLLWQVTVHHTWNAVLLPVVYLTAQVWILCAAIAAAASAGPQNCPSVCSCSNQFSKVVCTRRGLSEVPQGIPSNTRYLNLMENNIQMIQADTFRHLHHLEVLQLGRNSIRQIEVGAFNGLASLNTLELFDNWLTVIPSGAFEYLSKLRELWLRNNPIESIPSYAFNRVPSLMRLDLGELKKLEYISEGAFEGLFNLKYLNLGMCNIKDMPNLTPLVGLEELEMSGNHFPEIRPGSFHGLSSLKKLWVMNSQVSLIERNAFDGLASLVELNLAHNNLSSLPHDLFTPLRYLVELHLHHNPWNCDCDILWLAWWLREYIPTNSTCCGRCHAPMHMRGRYLVEVDQAAFQCSAPFIMDAPRDLNISEDRMAELKCRTPPMSSVKWLLPNGTVLSHASRHPRISVLNDGTLNFSRVLLIDTGVYTCMVTNVAGNSNASAYLNVSSAELNTPNFSFFTTVTVETTEISPEDITRKYKPVPTTSTGYQPAYTTSTTVLIQTTRVPKQVPVPSTDTTDKMQTSLDEVMKTTKIIIGCFVAVTLLAAAMLIVFYKLRKRHQQRSTVTAARTVEIIQVDEDIPAAAPAAATAAPSGVSGEGAVVLPTIHDHINYNTYKPAHGAHWTENSLGNSLHPTVTTISEPYIIQTHTKDKVQETQI.

The signal sequence occupies residues 1-40 (MKLLWQVTVHHTWNAVLLPVVYLTAQVWILCAAIAAAASA). One can recognise an LRRNT domain in the interval 41–74 (GPQNCPSVCSCSNQFSKVVCTRRGLSEVPQGIPS). Topologically, residues 41–526 (GPQNCPSVCS…SLDEVMKTTK (486 aa)) are extracellular. 2 cysteine pairs are disulfide-bonded: cysteine 45–cysteine 51 and cysteine 49–cysteine 60. LRR repeat units follow at residues 75–96 (NTRY…TFRH), 99–120 (HLEV…AFNG), 123–144 (SLNT…AFEY), 147–168 (KLRE…AFNR), 171–193 (SLMR…AFEG), 196–217 (NLKY…TPLV), 218–239 (GLEE…SFHG), 242–263 (SLKK…AFDG), and 266–287 (SLVE…LFTP). Residues asparagine 276, asparagine 321, asparagine 362, asparagine 387, asparagine 409, asparagine 433, asparagine 439, and asparagine 449 are each glycosylated (N-linked (GlcNAc...) asparagine). An LRRCT domain is found at 299–351 (NPWNCDCDILWLAWWLREYIPTNSTCCGRCHAPMHMRGRYLVEVDQAAFQCSA). Cystine bridges form between cysteine 303/cysteine 328 and cysteine 305/cysteine 349. The Ig-like domain maps to 352 to 441 (PFIMDAPRDL…SNASAYLNVS (90 aa)). Cysteine 373 and cysteine 423 are oxidised to a cystine. A helical transmembrane segment spans residues 527–547 (IIIGCFVAVTLLAAAMLIVFY). Residues 548–652 (KLRKRHQQRS…TKDKVQETQI (105 aa)) lie on the Cytoplasmic side of the membrane.

In terms of assembly, interacts (via LRR repeats) with NTNG2. Interacts with DLG4. Forms a complex with DLG4 and with NMDA receptors. In terms of processing, N-glycosylated. In terms of tissue distribution, specifically expressed in brain. In the hippocampus, parietal cortex and piriform cortex expressed in proximal segments of CA1 pyramidal neurons.

It is found in the membrane. Its subcellular location is the postsynaptic cell membrane. In terms of biological role, synaptic adhesion protein. Regulates the formation of exitatory synapses through the recruitment of pre-and-postsynaptic proteins. Organize the lamina/pathway-specific differentiation of dendrites. Plays an important role for auditory synaptic responses. Involved in the suppression of glioma. The protein is Leucine-rich repeat-containing protein 4 (Lrrc4) of Mus musculus (Mouse).